We begin with the raw amino-acid sequence, 189 residues long: Elongation factor P (189 aa).

Belongs to the elongation factor P family.

The protein localises to the cytoplasm. It participates in protein biosynthesis; polypeptide chain elongation. In terms of biological role, involved in peptide bond synthesis. Stimulates efficient translation and peptide-bond synthesis on native or reconstituted 70S ribosomes in vitro. Probably functions indirectly by altering the affinity of the ribosome for aminoacyl-tRNA, thus increasing their reactivity as acceptors for peptidyl transferase. The sequence is that of Elongation factor P from Rhizobium johnstonii (strain DSM 114642 / LMG 32736 / 3841) (Rhizobium leguminosarum bv. viciae).